Here is a 134-residue protein sequence, read N- to C-terminus: CDGSH iron-sulfur domain-containing protein 2 homolog (134 aa).

Topologically, residues 1–35 are lumenal; the sequence is MESLSHLVKSTLPNYLSNLPVPDTLGGWFKLSFKD. A helical membrane pass occupies residues 36–58; sequence WLALIPPTVVVAGIGYTGYLAFC. Topologically, residues 59-134 are cytoplasmic; sequence PAAQDRCSAK…DNVGPVVVKK (76 aa). [2Fe-2S] cluster contacts are provided by Cys-101, Cys-103, Cys-112, and His-116.

Belongs to the CISD protein family. CISD2 subfamily. [2Fe-2S] cluster is required as a cofactor.

The protein localises to the endoplasmic reticulum membrane. In Drosophila willistoni (Fruit fly), this protein is CDGSH iron-sulfur domain-containing protein 2 homolog.